Consider the following 133-residue polypeptide: ATP synthase epsilon chain, chloroplastic (133 aa).

This sequence belongs to the ATPase epsilon chain family. F-type ATPases have 2 components, CF(1) - the catalytic core - and CF(0) - the membrane proton channel. CF(1) has five subunits: alpha(3), beta(3), gamma(1), delta(1), epsilon(1). CF(0) has three main subunits: a, b and c.

The protein resides in the plastid. Its subcellular location is the chloroplast thylakoid membrane. Its function is as follows. Produces ATP from ADP in the presence of a proton gradient across the membrane. This Atropa belladonna (Belladonna) protein is ATP synthase epsilon chain, chloroplastic.